Here is a 937-residue protein sequence, read N- to C-terminus: Isoleucine--tRNA ligase (937 aa).

A 'HIGH' region motif is present at residues 58–68 (PYANGSIHIGH). Residue glutamate 561 coordinates L-isoleucyl-5'-AMP. Residues 602–606 (KMSKS) carry the 'KMSKS' region motif. Residue lysine 605 participates in ATP binding. Zn(2+) is bound by residues cysteine 900, cysteine 903, cysteine 920, and cysteine 923.

It belongs to the class-I aminoacyl-tRNA synthetase family. IleS type 1 subfamily. As to quaternary structure, monomer. Zn(2+) serves as cofactor.

Its subcellular location is the cytoplasm. The catalysed reaction is tRNA(Ile) + L-isoleucine + ATP = L-isoleucyl-tRNA(Ile) + AMP + diphosphate. Catalyzes the attachment of isoleucine to tRNA(Ile). As IleRS can inadvertently accommodate and process structurally similar amino acids such as valine, to avoid such errors it has two additional distinct tRNA(Ile)-dependent editing activities. One activity is designated as 'pretransfer' editing and involves the hydrolysis of activated Val-AMP. The other activity is designated 'posttransfer' editing and involves deacylation of mischarged Val-tRNA(Ile). The sequence is that of Isoleucine--tRNA ligase from Photorhabdus laumondii subsp. laumondii (strain DSM 15139 / CIP 105565 / TT01) (Photorhabdus luminescens subsp. laumondii).